The sequence spans 137 residues: ATP synthase epsilon chain (137 aa).

It belongs to the ATPase epsilon chain family. In terms of assembly, F-type ATPases have 2 components, CF(1) - the catalytic core - and CF(0) - the membrane proton channel. CF(1) has five subunits: alpha(3), beta(3), gamma(1), delta(1), epsilon(1). CF(0) has three main subunits: a, b and c.

It is found in the cellular thylakoid membrane. In terms of biological role, produces ATP from ADP in the presence of a proton gradient across the membrane. In Trichodesmium erythraeum (strain IMS101), this protein is ATP synthase epsilon chain.